Here is a 369-residue protein sequence, read N- to C-terminus: Anhydro-N-acetylmuramic acid kinase (369 aa).

Residue 12–19 (GTSMDGVD) coordinates ATP.

Belongs to the anhydro-N-acetylmuramic acid kinase family.

The catalysed reaction is 1,6-anhydro-N-acetyl-beta-muramate + ATP + H2O = N-acetyl-D-muramate 6-phosphate + ADP + H(+). It participates in amino-sugar metabolism; 1,6-anhydro-N-acetylmuramate degradation. It functions in the pathway cell wall biogenesis; peptidoglycan recycling. Functionally, catalyzes the specific phosphorylation of 1,6-anhydro-N-acetylmuramic acid (anhMurNAc) with the simultaneous cleavage of the 1,6-anhydro ring, generating MurNAc-6-P. Is required for the utilization of anhMurNAc either imported from the medium or derived from its own cell wall murein, and thus plays a role in cell wall recycling. The protein is Anhydro-N-acetylmuramic acid kinase of Shewanella sp. (strain MR-7).